The sequence spans 419 residues: Lipid II:glycine glycyltransferase (419 aa).

The protein belongs to the FemABX family.

Its subcellular location is the cytoplasm. The enzyme catalyses beta-D-GlcNAc-(1-&gt;4)-Mur2Ac(oyl-L-Ala-D-isoglutaminyl-L-Lys-D-Ala-D-Ala)-di-trans,octa-cis-undecaprenyl diphosphate + glycyl-tRNA(Gly) = beta-D-GlcNAc-(1-&gt;4)-Mur2Ac(oyl-L-Ala-D-isoglutaminyl-L-Lys-(N(6)-Gly)-D-Ala-D-Ala)-di-trans,octa-cis-undecaprenyl diphosphate + tRNA(Gly) + H(+). Catalyzes the incorporation of amino acid(s) into the interchain peptide bridge of peptidoglycan, using aminoacyl-tRNA as amino acid donor. The protein is Lipid II:glycine glycyltransferase (femX) of Staphylococcus haemolyticus (strain JCSC1435).